We begin with the raw amino-acid sequence, 708 residues long: Kin of IRRE-like protein 2 (708 aa).

An N-terminal signal peptide occupies residues 1 to 20; the sequence is MLRMRVPALLVLLFCFRGRA. The Extracellular segment spans residues 21-510; it reads GPSPHFLQQP…GRRDLLPTVR (490 aa). Ig-like C2-type domains lie at 24–118, 123–222, 227–307, 312–394, and 398–501; these read PHFL…AQLH, PEAP…ITLS, PEVT…TALD, PILQ…ARLT, and PPVV…ASLG. Cys45 and Cys103 are disulfide-bonded. Asn143 carries an N-linked (GlcNAc...) asparagine glycan. 2 cysteine pairs are disulfide-bonded: Cys146/Cys204 and Cys248/Cys291. Residues 149 to 151 carry the Cell attachment site motif; sequence RGD. N-linked (GlcNAc...) asparagine glycosylation occurs at Asn301. 2 disulfides stabilise this stretch: Cys333/Cys375 and Cys419/Cys485. The N-linked (GlcNAc...) asparagine glycan is linked to Asn484. Residues 511 to 531 form a helical membrane-spanning segment; the sequence is IVAGVAAATTTLLMVITGVAL. Residues 532–708 are Cytoplasmic-facing; sequence CCWRHSKASA…PSHPRLQTHV (177 aa). A disordered region spans residues 545–601; that stretch reads EQKNLMRIPGSSDGSSSRGPEEEETGSREDRGPIVHTDHSDLVLEEEGTLETKDPTN. Over residues 553 to 562 the composition is skewed to low complexity; the sequence is PGSSDGSSSR. Basic and acidic residues predominate over residues 569 to 586; the sequence is TGSREDRGPIVHTDHSDL. Phosphoserine is present on Ser571. Residues Tyr603, Tyr604, and Tyr661 each carry the phosphotyrosine modification. The interval 684 to 708 is disordered; that stretch reads LAPGTPPFPYAAFPTPSHPRLQTHV.

Belongs to the immunoglobulin superfamily. In terms of assembly, homodimer. Interacts with NPHS2/podocin (via the C-terminus). Interacts with NPHS1 (via the Ig-like domains). Interacts with FYN. N-glycosylated. In terms of processing, the extracellular domain is cleaved leading to the generation of a soluble fragment and a membrane-bound C-terminal fragment, which is further cleaved by gamma-secretase. As to expression, highly expressed in beta-cells of the pancreatic islets.

The protein localises to the cell membrane. Functionally, may regulate basal insulin secretion. This Homo sapiens (Human) protein is Kin of IRRE-like protein 2 (KIRREL2).